Here is a 184-residue protein sequence, read N- to C-terminus: Protein PLANT CADMIUM RESISTANCE 5 (184 aa).

Residues 1–26 (MGRPVGQTNQAQPSVQHTASPSNKVS) show a composition bias toward polar residues. A disordered region spans residues 1–33 (MGRPVGQTNQAQPSVQHTASPSNKVSHNGGIGK). Residues 94–114 (AGLLYGALFFTGASFVYSYMF) traverse the membrane as a helical segment.

The protein belongs to the cornifelin family.

Its subcellular location is the membrane. May be involved in heavy metals transport. In Arabidopsis thaliana (Mouse-ear cress), this protein is Protein PLANT CADMIUM RESISTANCE 5 (PCR5).